Consider the following 255-residue polypeptide: Type III pantothenate kinase (255 aa).

Residue 6 to 13 coordinates ATP; the sequence is DVGNTNIV. Substrate contacts are provided by residues Tyr-100 and 107 to 110; that span reads GADR. The Proton acceptor role is filled by Asp-109. Position 129 (Asp-129) interacts with K(+). Residue Thr-132 coordinates ATP. Thr-184 is a binding site for substrate.

Belongs to the type III pantothenate kinase family. Homodimer. It depends on NH4(+) as a cofactor. K(+) is required as a cofactor.

It localises to the cytoplasm. The catalysed reaction is (R)-pantothenate + ATP = (R)-4'-phosphopantothenate + ADP + H(+). It functions in the pathway cofactor biosynthesis; coenzyme A biosynthesis; CoA from (R)-pantothenate: step 1/5. In terms of biological role, catalyzes the phosphorylation of pantothenate (Pan), the first step in CoA biosynthesis. The polypeptide is Type III pantothenate kinase (Caldanaerobacter subterraneus subsp. tengcongensis (strain DSM 15242 / JCM 11007 / NBRC 100824 / MB4) (Thermoanaerobacter tengcongensis)).